The sequence spans 427 residues: Trigger factor (427 aa).

Positions 163–248 (GNIAIIDFKG…VKGIKAKELP (86 aa)) constitute a PPIase FKBP-type domain.

The protein belongs to the FKBP-type PPIase family. Tig subfamily.

It is found in the cytoplasm. The catalysed reaction is [protein]-peptidylproline (omega=180) = [protein]-peptidylproline (omega=0). Functionally, involved in protein export. Acts as a chaperone by maintaining the newly synthesized protein in an open conformation. Functions as a peptidyl-prolyl cis-trans isomerase. This Clostridium botulinum (strain Eklund 17B / Type B) protein is Trigger factor.